The primary structure comprises 482 residues: Probable glycine dehydrogenase (decarboxylating) subunit 2 (482 aa).

The residue at position 267 (Lys267) is an N6-(pyridoxal phosphate)lysine.

The protein belongs to the GcvP family. C-terminal subunit subfamily. In terms of assembly, the glycine cleavage system is composed of four proteins: P, T, L and H. In this organism, the P 'protein' is a heterodimer of two subunits. Pyridoxal 5'-phosphate serves as cofactor.

The catalysed reaction is N(6)-[(R)-lipoyl]-L-lysyl-[glycine-cleavage complex H protein] + glycine + H(+) = N(6)-[(R)-S(8)-aminomethyldihydrolipoyl]-L-lysyl-[glycine-cleavage complex H protein] + CO2. The glycine cleavage system catalyzes the degradation of glycine. The P protein binds the alpha-amino group of glycine through its pyridoxal phosphate cofactor; CO(2) is released and the remaining methylamine moiety is then transferred to the lipoamide cofactor of the H protein. This Aquifex aeolicus (strain VF5) protein is Probable glycine dehydrogenase (decarboxylating) subunit 2.